A 219-amino-acid polypeptide reads, in one-letter code: ATP-dependent Clp protease proteolytic subunit (219 aa).

Residues M1–V22 are disordered. The active-site Nucleophile is the S116. Residue H141 is part of the active site.

It belongs to the peptidase S14 family. In terms of assembly, component of the chloroplastic Clp protease core complex.

The protein localises to the plastid. It localises to the chloroplast stroma. The catalysed reaction is Hydrolysis of proteins to small peptides in the presence of ATP and magnesium. alpha-casein is the usual test substrate. In the absence of ATP, only oligopeptides shorter than five residues are hydrolyzed (such as succinyl-Leu-Tyr-|-NHMec, and Leu-Tyr-Leu-|-Tyr-Trp, in which cleavage of the -Tyr-|-Leu- and -Tyr-|-Trp bonds also occurs).. Cleaves peptides in various proteins in a process that requires ATP hydrolysis. Has a chymotrypsin-like activity. Plays a major role in the degradation of misfolded proteins. This Pelargonium hortorum (Common geranium) protein is ATP-dependent Clp protease proteolytic subunit.